The chain runs to 283 residues: tRNA-cytidine(32) 2-sulfurtransferase (283 aa).

Residues 37–42 (SGGKDS) carry the PP-loop motif motif. Residues C112, C115, and C203 each coordinate [4Fe-4S] cluster.

This sequence belongs to the TtcA family. As to quaternary structure, homodimer. Mg(2+) is required as a cofactor. The cofactor is [4Fe-4S] cluster.

The protein resides in the cytoplasm. The catalysed reaction is cytidine(32) in tRNA + S-sulfanyl-L-cysteinyl-[cysteine desulfurase] + AH2 + ATP = 2-thiocytidine(32) in tRNA + L-cysteinyl-[cysteine desulfurase] + A + AMP + diphosphate + H(+). The protein operates within tRNA modification. In terms of biological role, catalyzes the ATP-dependent 2-thiolation of cytidine in position 32 of tRNA, to form 2-thiocytidine (s(2)C32). The sulfur atoms are provided by the cysteine/cysteine desulfurase (IscS) system. The protein is tRNA-cytidine(32) 2-sulfurtransferase of Legionella pneumophila (strain Corby).